We begin with the raw amino-acid sequence, 374 residues long: MEISYYEILEITQNADKETIKKAYRKMALKYHPDRNQGDKEAEDKFKLVNEAYEVLSNDEKRAIYDRYGKDALKGGGFGSNSSGFGGFEDLGDIFSSFFGESFGSSSRRRKSSNDEKIPSDFIFNLKLSFKEAVFGCKKNIDFTYKCSCKTCNGTGAKDGKLQTCPKCQGRGQVGVSQGFITFAQTCPDCQGSGEKASEKCNDCKGLGYNESKDSVELNIPEGVDTGMKLRVNAKGNILKNNTRGDMYVKIIAAEDDTFIRDDDDIYIEFPVFFTQAILGQSIKVPTIRGEVTLNLPKGAKDGQRFVLEKEGVKDVHSSRIGNQIVQISIKFPTSLNDEQKELLEKLSESFGIKDGMHQEQKGLFEKIANWFKS.

A J domain is found at 4–69 (SYYEILEITQ…EKRAIYDRYG (66 aa)). The CR-type zinc finger occupies 136–213 (GCKKNIDFTY…CKGLGYNESK (78 aa)). Residues Cys149, Cys152, Cys165, Cys168, Cys187, Cys190, Cys201, and Cys204 each contribute to the Zn(2+) site. CXXCXGXG motif repeat units follow at residues 149 to 156 (CKTCNGTG), 165 to 172 (CPKCQGRG), 187 to 194 (CPDCQGSG), and 201 to 208 (CNDCKGLG).

The protein belongs to the DnaJ family. As to quaternary structure, homodimer. Requires Zn(2+) as cofactor.

The protein localises to the cytoplasm. In terms of biological role, participates actively in the response to hyperosmotic and heat shock by preventing the aggregation of stress-denatured proteins and by disaggregating proteins, also in an autonomous, DnaK-independent fashion. Unfolded proteins bind initially to DnaJ; upon interaction with the DnaJ-bound protein, DnaK hydrolyzes its bound ATP, resulting in the formation of a stable complex. GrpE releases ADP from DnaK; ATP binding to DnaK triggers the release of the substrate protein, thus completing the reaction cycle. Several rounds of ATP-dependent interactions between DnaJ, DnaK and GrpE are required for fully efficient folding. Also involved, together with DnaK and GrpE, in the DNA replication of plasmids through activation of initiation proteins. The polypeptide is Chaperone protein DnaJ (Campylobacter jejuni subsp. doylei (strain ATCC BAA-1458 / RM4099 / 269.97)).